The sequence spans 202 residues: MSKLVIGLTGGIGSGKTTITNYFLALGVEIIDADIIAREVVAINSPALKAIAKHFGDDYIQADGQLNRPLLRNRIFSNKADKLWLNKLLHPLIRVNIVTQTKEAKSPYCILVAPLLIENNLLELVDRVLIVDVNESTQITRTLVRDSSSEQEIKAIIASQTSRAARVNVADDIINNDDSPLSEIKEAVLSLDKKYLTLTKMV.

Residues 5–202 (VIGLTGGIGS…KKYLTLTKMV (198 aa)) enclose the DPCK domain. 13–18 (GSGKTT) contacts ATP.

It belongs to the CoaE family.

It is found in the cytoplasm. It catalyses the reaction 3'-dephospho-CoA + ATP = ADP + CoA + H(+). Its pathway is cofactor biosynthesis; coenzyme A biosynthesis; CoA from (R)-pantothenate: step 5/5. Catalyzes the phosphorylation of the 3'-hydroxyl group of dephosphocoenzyme A to form coenzyme A. This is Dephospho-CoA kinase from Colwellia psychrerythraea (strain 34H / ATCC BAA-681) (Vibrio psychroerythus).